We begin with the raw amino-acid sequence, 68 residues long: Pleurocidin (68 aa).

A signal peptide spans 1 to 22 (MKFTATFLMMAIFVLMVEPGEC). Positions 48–68 (GDKQELNKRAVDEDPNVIVFE) are excised as a propeptide.

This sequence belongs to the pleurocidin family. In terms of tissue distribution, goblet cells.

It is found in the secreted. Its subcellular location is the membrane. In terms of biological role, antimicrobial peptide with potent activity against Gram-positive and Gram-negative bacteria. Activity against E.coli and B.subtilis. Weaker activity against L.mucor, s.marcescens and P.aeruginosa. May play a role in innate host defense. This chain is Pleurocidin (ple1), found in Pseudopleuronectes americanus (Winter flounder).